Consider the following 273-residue polypeptide: Large ribosomal subunit protein uL2 (273 aa).

Disordered stretches follow at residues 34 to 54 and 223 to 273; these read LEKK…TRHI and VAMN…RRRK.

It belongs to the universal ribosomal protein uL2 family. Part of the 50S ribosomal subunit. Forms a bridge to the 30S subunit in the 70S ribosome.

One of the primary rRNA binding proteins. Required for association of the 30S and 50S subunits to form the 70S ribosome, for tRNA binding and peptide bond formation. It has been suggested to have peptidyltransferase activity; this is somewhat controversial. Makes several contacts with the 16S rRNA in the 70S ribosome. This chain is Large ribosomal subunit protein uL2, found in Azotobacter vinelandii (strain DJ / ATCC BAA-1303).